We begin with the raw amino-acid sequence, 128 residues long: MARILILLLGGLVVLCAGHGVFMDKLSSKKLCADEECVYTISLARAQEDYNAPDCRFIDVKKGQQIYVYSKLVTENGAGEFWAGSVYGDHQDEMGIVGYFPSNLVKEQRVYQEATKEIPTTDIDFFCE.

A signal peptide spans 1 to 18; sequence MARILILLLGGLVVLCAG. Cystine bridges form between cysteine 32–cysteine 37 and cysteine 55–cysteine 127. In terms of domain architecture, SH3 spans 39-110; sequence YTISLARAQE…PSNLVKEQRV (72 aa).

The protein belongs to the MIA/OTOR family. As to expression, highly expressed in cochlea.

The protein resides in the secreted. This chain is Otoraplin (Otor), found in Mus musculus (Mouse).